The primary structure comprises 270 residues: Putative phosphoenolpyruvate synthase regulatory protein (270 aa).

Position 150–157 (150–157) interacts with ADP; that stretch reads GVSRCGKT.

It belongs to the pyruvate, phosphate/water dikinase regulatory protein family. PSRP subfamily.

The enzyme catalyses [pyruvate, water dikinase] + ADP = [pyruvate, water dikinase]-phosphate + AMP + H(+). The catalysed reaction is [pyruvate, water dikinase]-phosphate + phosphate + H(+) = [pyruvate, water dikinase] + diphosphate. Its function is as follows. Bifunctional serine/threonine kinase and phosphorylase involved in the regulation of the phosphoenolpyruvate synthase (PEPS) by catalyzing its phosphorylation/dephosphorylation. In Shewanella oneidensis (strain ATCC 700550 / JCM 31522 / CIP 106686 / LMG 19005 / NCIMB 14063 / MR-1), this protein is Putative phosphoenolpyruvate synthase regulatory protein.